Reading from the N-terminus, the 274-residue chain is Cytochrome b-c1 complex subunit Rieske, mitochondrial (274 aa).

Residues 79-103 (SHTDIKVPDFSDYRRSEVLDKTKSS) are Mitochondrial matrix-facing. The helical transmembrane segment at 104–140 (RESSDARKGFSYLVTAATAVGVTYAAKSIVTQFVSSM) threads the bilayer. The Mitochondrial intermembrane segment spans residues 141–274 (SASADVLAMS…FTGDDMVIVG (134 aa)). Residues 187 to 272 (EAAVELSQLR…YEFTGDDMVI (86 aa)) form the Rieske domain. 5 residues coordinate [2Fe-2S] cluster: C217, H219, C236, H239, and S241. A disulfide bridge connects residues C222 and C238.

Belongs to the Rieske iron-sulfur protein family. In terms of assembly, component of the ubiquinol-cytochrome c oxidoreductase (cytochrome b-c1 complex, complex III, CIII), a multisubunit enzyme composed of 11 subunits. The complex is composed of 3 respiratory subunits cytochrome b, cytochrome c1 and Rieske protein UQCRFS1, 2 core protein subunits UQCRC1/QCR1 and UQCRC2/QCR2, and 6 low-molecular weight protein subunits UQCRH/QCR6, UQCRB/QCR7, UQCRQ/QCR8, UQCR10/QCR9, UQCR11/QCR10 and subunit 9, the cleavage product of Rieske protein UQCRFS1. The complex exists as an obligatory dimer and forms supercomplexes (SCs) in the inner mitochondrial membrane with NADH-ubiquinone oxidoreductase (complex I, CI) and cytochrome c oxidase (complex IV, CIV), resulting in different assemblies (supercomplex SCI(1)III(2)IV(1) and megacomplex MCI(2)III(2)IV(2)). Incorporation of the Rieske protein UQCRFS1 is the penultimate step in complex III assembly. Interacts with TTC19, which is involved in the clearance of UQCRFS1 fragments. Component of the ubiquinol-cytochrome c oxidoreductase (cytochrome b-c1 complex, complex III, CIII). Subunit 9 corresponds to the mitochondrial targeting sequence (MTS) of Rieske protein UQCRFS1. It is retained after processing and incorporated inside complex III, where it remains bound to the complex and localizes between the 2 core subunits UQCRC1/QCR1 and UQCRC2/QCR2. [2Fe-2S] cluster serves as cofactor. Proteolytic processing is necessary for the correct insertion of UQCRFS1 in the complex III dimer. Several fragments are generated during UQCRFS1 insertion, most probably due to the endogenous matrix-processing peptidase (MPP) activity of the 2 core protein subunits UQCRC1/QCR1 and UQCRC2/QCR2, which are homologous to the 2 mitochondrial-processing peptidase (MPP) subunits beta-MPP and alpha-MPP respectively. The action of the protease is also necessary for the clearance of the UQCRFS1 fragments.

Its subcellular location is the mitochondrion inner membrane. The enzyme catalyses a quinol + 2 Fe(III)-[cytochrome c](out) = a quinone + 2 Fe(II)-[cytochrome c](out) + 2 H(+)(out). Functionally, component of the ubiquinol-cytochrome c oxidoreductase, a multisubunit transmembrane complex that is part of the mitochondrial electron transport chain which drives oxidative phosphorylation. The respiratory chain contains 3 multisubunit complexes succinate dehydrogenase (complex II, CII), ubiquinol-cytochrome c oxidoreductase (cytochrome b-c1 complex, complex III, CIII) and cytochrome c oxidase (complex IV, CIV), that cooperate to transfer electrons derived from NADH and succinate to molecular oxygen, creating an electrochemical gradient over the inner membrane that drives transmembrane transport and the ATP synthase. The cytochrome b-c1 complex catalyzes electron transfer from ubiquinol to cytochrome c, linking this redox reaction to translocation of protons across the mitochondrial inner membrane, with protons being carried across the membrane as hydrogens on the quinol. In the process called Q cycle, 2 protons are consumed from the matrix, 4 protons are released into the intermembrane space and 2 electrons are passed to cytochrome c. The Rieske protein is a catalytic core subunit containing a [2Fe-2S] iron-sulfur cluster. It cycles between 2 conformational states during catalysis to transfer electrons from the quinol bound in the Q(0) site in cytochrome b to cytochrome c1. Incorporation of UQCRFS1 is the penultimate step in complex III assembly. Component of the ubiquinol-cytochrome c oxidoreductase (cytochrome b-c1 complex, complex III, CIII). UQCRFS1 undergoes proteolytic processing once it is incorporated in the complex III dimer. One of the fragments, called subunit 9, corresponds to its mitochondrial targeting sequence (MTS). The proteolytic processing is necessary for the correct insertion of UQCRFS1 in the complex III dimer, but the persistence of UQCRFS1-derived fragments may prevent newly imported UQCRFS1 to be processed and assembled into complex III and is detrimental for the complex III structure and function. This is Cytochrome b-c1 complex subunit Rieske, mitochondrial (UQCRFS1) from Lagothrix lagotricha (Brown woolly monkey).